The primary structure comprises 180 residues: Large ribosomal subunit protein uL5c (180 aa).

The protein belongs to the universal ribosomal protein uL5 family. Part of the 50S ribosomal subunit; contacts the 5S rRNA.

Its subcellular location is the plastid. It localises to the chloroplast. Functionally, binds 5S rRNA, forms part of the central protuberance of the 50S subunit. In Oltmannsiellopsis viridis (Marine flagellate), this protein is Large ribosomal subunit protein uL5c (rpl5).